The chain runs to 401 residues: Phosrestin-1 (401 aa).

Belongs to the arrestin family.

Functionally, directly interacts with light-activated rhodopsin thereby activating the phosphorylation of metarhodopsin. Inhibits the dephosphorylation of metarhodopsin. This is Phosrestin-1 (ARR2) from Calliphora vicina (Blue blowfly).